The sequence spans 465 residues: Ribulose bisphosphate carboxylase large chain (465 aa).

K4 is modified (N6,N6,N6-trimethyllysine). The substrate site is built by N113 and T163. Residue K165 is the Proton acceptor of the active site. Residue K167 coordinates substrate. K191, D193, and E194 together coordinate Mg(2+). K191 is modified (N6-carboxylysine). The active-site Proton acceptor is the H284. The substrate site is built by R285, H317, and S369.

It belongs to the RuBisCO large chain family. Type I subfamily. As to quaternary structure, heterohexadecamer of 8 large chains and 8 small chains; disulfide-linked. The disulfide link is formed within the large subunit homodimers. It depends on Mg(2+) as a cofactor. The disulfide bond which can form in the large chain dimeric partners within the hexadecamer appears to be associated with oxidative stress and protein turnover.

The protein localises to the plastid. It is found in the chloroplast. It catalyses the reaction 2 (2R)-3-phosphoglycerate + 2 H(+) = D-ribulose 1,5-bisphosphate + CO2 + H2O. The catalysed reaction is D-ribulose 1,5-bisphosphate + O2 = 2-phosphoglycolate + (2R)-3-phosphoglycerate + 2 H(+). In terms of biological role, ruBisCO catalyzes two reactions: the carboxylation of D-ribulose 1,5-bisphosphate, the primary event in carbon dioxide fixation, as well as the oxidative fragmentation of the pentose substrate in the photorespiration process. Both reactions occur simultaneously and in competition at the same active site. The sequence is that of Ribulose bisphosphate carboxylase large chain from Morus rubra (Red mulberry).